The chain runs to 706 residues: Ribosomal RNA large subunit methyltransferase K/L (706 aa).

Residues 43–154 (LMYQSLLWSR…RDMASVALDL (112 aa)) form the THUMP domain.

This sequence belongs to the methyltransferase superfamily. RlmKL family.

It localises to the cytoplasm. The catalysed reaction is guanosine(2445) in 23S rRNA + S-adenosyl-L-methionine = N(2)-methylguanosine(2445) in 23S rRNA + S-adenosyl-L-homocysteine + H(+). It catalyses the reaction guanosine(2069) in 23S rRNA + S-adenosyl-L-methionine = N(2)-methylguanosine(2069) in 23S rRNA + S-adenosyl-L-homocysteine + H(+). Its function is as follows. Specifically methylates the guanine in position 2445 (m2G2445) and the guanine in position 2069 (m7G2069) of 23S rRNA. The chain is Ribosomal RNA large subunit methyltransferase K/L from Yersinia pseudotuberculosis serotype IB (strain PB1/+).